Reading from the N-terminus, the 257-residue chain is Protein YIPF5 (257 aa).

The Cytoplasmic portion of the chain corresponds to 1-124 (MSGFENLNTD…KVADGSIMNE (124 aa)). The interaction with Sec23 stretch occupies residues 75-106 (PASPQPFYGNSFEDEPPLLEELGINFDHIWQK). The helical transmembrane segment at 125 to 145 (TDLAGPMVFCLAFGATLLLAG) threads the bilayer. Residue lysine 146 is a topological domain, lumenal. A helical transmembrane segment spans residues 147-167 (IQFGYVYGISAIGCLGMFCLL). Residues 168–173 (NLMSMT) lie on the Cytoplasmic side of the membrane. A helical transmembrane segment spans residues 174–194 (GVSFGCVASVLGYCLLPMILL). At 195-196 (SS) the chain is on the lumenal side. The chain crosses the membrane as a helical span at residues 197–217 (FAVIFSLQGMVGIILTAGIIG). Topologically, residues 218–236 (WCSFSASKIFISALAMEGQ) are cytoplasmic. A helical transmembrane segment spans residues 237–257 (QLLVAYPCALLYGVFALISVF).

Belongs to the YIP1 family. As to quaternary structure, interacts with the COPII coat components Sec23 (SEC23A and/or SEC23B) and Sec24 (SEC24A and/or SEC24B). Interacts with YIF1A. May interact with RAB1A. Interacts with YIPF3 and YIPF4.

The protein localises to the endoplasmic reticulum membrane. Its subcellular location is the golgi apparatus. It is found in the cis-Golgi network membrane. The protein resides in the cytoplasmic vesicle. It localises to the COPII-coated vesicle. Plays a role in transport between endoplasmic reticulum and Golgi. In pancreatic beta cells, required to transport proinsulin from endoplasmic reticulum into the Golgi. The protein is Protein YIPF5 (YIPF5) of Macaca fascicularis (Crab-eating macaque).